Consider the following 84-residue polypeptide: Carboxysome shell vertex protein CsoS4B (84 aa).

The region spanning 1-77 (MQILQVKKQL…TDLTVGGIID (77 aa)) is the BMV domain.

It belongs to the CcmL/EutN family. CsoS4 subfamily. As to quaternary structure, homopentamer.

The protein resides in the carboxysome. Probably forms vertices in the carboxysome, a polyhedral inclusion where RuBisCO (ribulose bisphosphate carboxylase, cbbL-cbbS) is sequestered. Has been modeled to induce curvature upon insertion into an otherwise flat hexagonal layer of major carboxysome subunits. This Hydrogenovibrio crunogenus (strain DSM 25203 / XCL-2) (Thiomicrospira crunogena) protein is Carboxysome shell vertex protein CsoS4B.